The following is a 705-amino-acid chain: Ribosomal RNA large subunit methyltransferase K/L (705 aa).

In terms of domain architecture, THUMP spans 43–154 (VVYRCCLWSR…GEKGILGFDL (112 aa)).

It belongs to the methyltransferase superfamily. RlmKL family.

The protein localises to the cytoplasm. It catalyses the reaction guanosine(2445) in 23S rRNA + S-adenosyl-L-methionine = N(2)-methylguanosine(2445) in 23S rRNA + S-adenosyl-L-homocysteine + H(+). It carries out the reaction guanosine(2069) in 23S rRNA + S-adenosyl-L-methionine = N(2)-methylguanosine(2069) in 23S rRNA + S-adenosyl-L-homocysteine + H(+). Its function is as follows. Specifically methylates the guanine in position 2445 (m2G2445) and the guanine in position 2069 (m7G2069) of 23S rRNA. The protein is Ribosomal RNA large subunit methyltransferase K/L of Aliivibrio salmonicida (strain LFI1238) (Vibrio salmonicida (strain LFI1238)).